A 502-amino-acid chain; its full sequence is Galactose/methyl galactoside import ATP-binding protein MglA (502 aa).

ABC transporter domains follow at residues 10–245 and 255–502; these read LEMT…VGRE and NTPK…SRYL. 42 to 49 serves as a coordination point for ATP; it reads GENGAGKS.

The protein belongs to the ABC transporter superfamily. Galactose/methyl galactoside importer (TC 3.A.1.2.3) family. As to quaternary structure, the complex is composed of one ATP-binding protein (MglA), two transmembrane proteins (MglC) and a solute-binding protein (MglB).

It is found in the cell inner membrane. It carries out the reaction D-galactose(out) + ATP + H2O = D-galactose(in) + ADP + phosphate + H(+). The enzyme catalyses methyl beta-D-galactoside(out) + ATP + H2O = methyl beta-D-galactoside(in) + ADP + phosphate + H(+). Functionally, part of the ABC transporter complex MglABC involved in galactose/methyl galactoside import. Responsible for energy coupling to the transport system. The sequence is that of Galactose/methyl galactoside import ATP-binding protein MglA from Vibrio vulnificus (strain CMCP6).